The primary structure comprises 246 residues: Chloroplastic group IIB intron splicing facilitator CRS2-A, chloroplastic (246 aa).

Residues 1–34 (MFCASSSPITSPLYPKAYKFSQTKSNSKRFSSLR) constitute a chloroplast transit peptide. A tRNA-binding site is contributed by Tyr64. His69 functions as the Proton acceptor in the catalytic mechanism. TRNA-binding residues include Tyr114, Asn116, and Asn162.

Belongs to the PTH family. CRS2 subfamily. As to quaternary structure, part of large ribonucleo-protein complexes that include group IIB introns and either CAF1 or CAF2.

It localises to the plastid. It is found in the chloroplast stroma. Required for the splicing of group IIB introns in chloroplasts. The chain is Chloroplastic group IIB intron splicing facilitator CRS2-A, chloroplastic (CRS2A) from Arabidopsis thaliana (Mouse-ear cress).